A 276-amino-acid chain; its full sequence is Diaminopimelate epimerase (276 aa).

Substrate is bound by residues asparagine 13, glutamine 46, and asparagine 66. Cysteine 75 serves as the catalytic Proton donor. Substrate is bound by residues 76–77 (GN), asparagine 159, asparagine 192, and 210–211 (ER). Residue cysteine 219 is the Proton acceptor of the active site. 220–221 (GT) provides a ligand contact to substrate.

This sequence belongs to the diaminopimelate epimerase family. As to quaternary structure, homodimer.

It localises to the cytoplasm. The enzyme catalyses (2S,6S)-2,6-diaminopimelate = meso-2,6-diaminopimelate. It participates in amino-acid biosynthesis; L-lysine biosynthesis via DAP pathway; DL-2,6-diaminopimelate from LL-2,6-diaminopimelate: step 1/1. Catalyzes the stereoinversion of LL-2,6-diaminopimelate (L,L-DAP) to meso-diaminopimelate (meso-DAP), a precursor of L-lysine and an essential component of the bacterial peptidoglycan. This chain is Diaminopimelate epimerase, found in Pseudomonas fluorescens.